The primary structure comprises 358 residues: tRNA N6-adenosine threonylcarbamoyltransferase (358 aa).

H122 and H126 together coordinate Fe cation. Residues 145–149 (LVSGG), D178, G191, and N287 contribute to the substrate site. Residue D315 coordinates Fe cation.

Belongs to the KAE1 / TsaD family. Requires Fe(2+) as cofactor.

It is found in the cytoplasm. It catalyses the reaction L-threonylcarbamoyladenylate + adenosine(37) in tRNA = N(6)-L-threonylcarbamoyladenosine(37) in tRNA + AMP + H(+). In terms of biological role, required for the formation of a threonylcarbamoyl group on adenosine at position 37 (t(6)A37) in tRNAs that read codons beginning with adenine. Is involved in the transfer of the threonylcarbamoyl moiety of threonylcarbamoyl-AMP (TC-AMP) to the N6 group of A37, together with TsaE and TsaB. TsaD likely plays a direct catalytic role in this reaction. In Hydrogenovibrio crunogenus (strain DSM 25203 / XCL-2) (Thiomicrospira crunogena), this protein is tRNA N6-adenosine threonylcarbamoyltransferase.